We begin with the raw amino-acid sequence, 284 residues long: Release factor glutamine methyltransferase (284 aa).

Residues 125–129 (GVGSG), E148, and N190 contribute to the S-adenosyl-L-methionine site. Residue 190–193 (NPPY) participates in substrate binding.

This sequence belongs to the protein N5-glutamine methyltransferase family. PrmC subfamily.

The enzyme catalyses L-glutaminyl-[peptide chain release factor] + S-adenosyl-L-methionine = N(5)-methyl-L-glutaminyl-[peptide chain release factor] + S-adenosyl-L-homocysteine + H(+). In terms of biological role, methylates the class 1 translation termination release factors RF1/PrfA and RF2/PrfB on the glutamine residue of the universally conserved GGQ motif. The protein is Release factor glutamine methyltransferase of Geobacter sulfurreducens (strain ATCC 51573 / DSM 12127 / PCA).